Here is a 340-residue protein sequence, read N- to C-terminus: Glyceraldehyde-3-phosphate dehydrogenase (340 aa).

Residues 11–12 (TI) and glycine 109 contribute to the NAD(+) site. Residue 138-140 (SCN) participates in D-glyceraldehyde 3-phosphate binding. Cysteine 139 (nucleophile) is an active-site residue. NAD(+) is bound at residue arginine 167. Position 193 to 194 (193 to 194 (HA)) interacts with D-glyceraldehyde 3-phosphate. NAD(+) is bound at residue glutamine 300.

This sequence belongs to the glyceraldehyde-3-phosphate dehydrogenase family. In terms of assembly, homotetramer.

It localises to the cytoplasm. It catalyses the reaction D-glyceraldehyde 3-phosphate + phosphate + NADP(+) = (2R)-3-phospho-glyceroyl phosphate + NADPH + H(+). The enzyme catalyses D-glyceraldehyde 3-phosphate + phosphate + NAD(+) = (2R)-3-phospho-glyceroyl phosphate + NADH + H(+). It participates in carbohydrate degradation; glycolysis; pyruvate from D-glyceraldehyde 3-phosphate: step 1/5. The chain is Glyceraldehyde-3-phosphate dehydrogenase from Saccharolobus islandicus (strain M.14.25 / Kamchatka #1) (Sulfolobus islandicus).